Reading from the N-terminus, the 284-residue chain is Avenin-like b11 (284 aa).

Residues 1–18 (MKVFILALLALTATTAIA) form the signal peptide.

This sequence belongs to the prolamin family. Post-translationally, contains disulfide bonds.

Functionally, seed storage protein. Might be integrated via inter-chain disulfide bonds within the glutenin polymer. The protein is Avenin-like b11 of Triticum aestivum (Wheat).